Reading from the N-terminus, the 145-residue chain is Ecdysteroid-regulated 16 kDa protein (145 aa).

The N-terminal stretch at 1–16 (MLFYITVTVLLVSAQA) is a signal peptide. 2 disulfide bridges follow: Cys-22–Cys-137 and Cys-90–Cys-97. A glycan (N-linked (GlcNAc...) asparagine) is linked at Asn-51.

The protein belongs to the NPC2 family.

The protein resides in the secreted. The sequence is that of Ecdysteroid-regulated 16 kDa protein (ESR16) from Manduca sexta (Tobacco hawkmoth).